The chain runs to 395 residues: GPI-anchor transamidase (395 aa).

A signal peptide spans 1–27; sequence MVGTWFLCRGFTTLAGLLLLPFGSLAA. Residues 28 to 368 lie on the Lumenal side of the membrane; that stretch reads SQIEDQAEQF…PKLKDWHPPG (341 aa). Ca(2+)-binding residues include aspartate 79, isoleucine 82, glutamate 118, and aspartate 120. The active-site Proton donor is histidine 164. The active-site Nucleophile; acyl-thioester intermediate is cysteine 206. 3 residues coordinate a protein: cysteine 206, serine 232, and serine 234. The autoinhibitory loop stretch occupies residues 231-236; the sequence is DSLSHQ. A disulfide bond links cysteine 275 and cysteine 280. The chain crosses the membrane as a helical span at residues 369 to 385; the sequence is GFILGLWALIIMVFFKT. The Cytoplasmic portion of the chain corresponds to 386 to 395; it reads YGIKHMKFIF.

This sequence belongs to the peptidase C13 family. Heteropentamer. Part of the GPI-anchor transamidase complex, consisting of PIGK, PIGT, PIGS, PIGU and GAA1. Interacts with GPAA1. Interacts with PIGT; this interaction, via a disulfide link, stabilizes the expression of GAA1 and PIGK and links them to PIGS. The disulfide bond between PIGK/GPI8 and PIGT is important for normal enzyme activity.

It localises to the endoplasmic reticulum membrane. Its pathway is glycolipid biosynthesis; glycosylphosphatidylinositol-anchor biosynthesis. In the absence of proproteins substrates, exists in an inactive state with a disrupted catalytic site by an autoinhibitory loop. The binding of proprotein substrates, particularly the CSP region, to GPI-T triggers concerted conformational changes that alleviate the inhibition by the autoinhibitory loop. Meanwhile, proprotein residues near the omega- site induce the formation of a catalytic cleft for catalysis, following which the products are released and GPI-T reverts to the inactive state. Catalytic subunit of the glycosylphosphatidylinositol-anchor (GPI-anchor) transamidase (GPI-T) complex that catalyzes the formation of the linkage between a proprotein and a GPI-anchor and participates in GPI anchored protein biosynthesis. Recognizes diverse proproteins at a C-terminal signal peptide (CSP) region that lacks consensus sequence and replaces it with a GPI-anchor via a transamidation reaction. Transamidation catalysis reaction follows a two-phase mechanism. In the acyl-enzyme phase, the carbonyl group of the proproteins's omega-site undergoes a nucleophilic attack forming an enzyme-substrate thioester bond. Followed by a general acid catalysis that allows CSP releasing, regenerating the carbonyl, and forming the acyl-enzyme intermediate. In the GPI-anchor attachment phase, the amino group of the GPI-anchor's ethanolamine phosphate, the one on third mannose (EtNP3), mediates a nucleophilic attack on the carbonyl of the acyl-enzyme intermediate, replacing the CSP, allowing GPI-anchor attachment to the omega-residue, therefore forming the product and freeing the enzyme. This Sus scrofa (Pig) protein is GPI-anchor transamidase.